A 588-amino-acid polypeptide reads, in one-letter code: Oxidoreductase NdmD (588 aa).

Residues 9-114 form the Rieske domain; the sequence is WFPIATTEDL…VREKHGFIWT (106 aa). [2Fe-2S] cluster contacts are provided by Cys50, His52, Cys69, and His72. One can recognise an FAD-binding FR-type domain in the interval 272 to 373; the sequence is PTHYICEVVT…TLPRNGFPLV (102 aa). Residues 503–588 enclose the 2Fe-2S ferredoxin-type domain; sequence YEVELKKTGQ…CKSKKIVLDL (86 aa). Residues Cys537, Cys542, Cys545, and Cys575 each coordinate [2Fe-2S] cluster.

[2Fe-2S] cluster serves as cofactor.

In terms of biological role, involved in the caffeine degradation, which is the essential first step for assimilating the carbon and nitrogen in caffeine. Catalyzes the oxidation of NADH and transfers electrons to NdmA and NdmB, which catalyze the N-demethylation reactions. The sequence is that of Oxidoreductase NdmD (ndmD) from Pseudomonas putida (Arthrobacter siderocapsulatus).